Reading from the N-terminus, the 350-residue chain is Enoyl-[acyl-carrier-protein] reductase, mitochondrial (350 aa).

The transit peptide at 1 to 12 (MWLGLRLFHRPF) directs the protein to the mitochondrion. Tyr-68 functions as the Proton donor in the catalytic mechanism. NADP(+) contacts are provided by residues Asn-141, 167–170 (NSGV), 190–192 (RDR), 259–262 (YGGM), 284–286 (FWV), and Lys-345.

The protein belongs to the zinc-containing alcohol dehydrogenase family. Quinone oxidoreductase subfamily. In terms of assembly, homodimer. In terms of tissue distribution, expressed in the developing pronephros.

The protein resides in the mitochondrion. The catalysed reaction is a 2,3-saturated acyl-[ACP] + NADP(+) = a (2E)-enoyl-[ACP] + NADPH + H(+). Functionally, catalyzes the NADPH-dependent reduction of trans-2-enoyl thioesters in mitochondrial fatty acid synthesis (fatty acid synthesis type II). Fatty acid chain elongation in mitochondria uses acyl carrier protein (ACP) as an acyl group carrier, but the enzyme accepts both ACP and CoA thioesters as substrates in vitro. May provide the octanoyl chain used for lipoic acid biosynthesis, regulating protein lipoylation and mitochondrial respiratory activity. Involved in iron homeostasis; affecting Fe-S cluster assembly and ceramide metabolism. Required for proper morphology and bioenergetic functions of mitochondria. Required for maintenance of neurons. Functions in pronephros development, regulating late differentiation of all pronephric tubule segments. In Xenopus tropicalis (Western clawed frog), this protein is Enoyl-[acyl-carrier-protein] reductase, mitochondrial (mecr).